The chain runs to 236 residues: Purine nucleoside phosphorylase DeoD-type (236 aa).

His5 is a binding site for a purine D-ribonucleoside. Phosphate is bound by residues Gly21, Arg25, Arg44, and 88-91; that span reads RVGS. A purine D-ribonucleoside contacts are provided by residues 180 to 182 and 204 to 205; these read DME and SD. Asp205 functions as the Proton donor in the catalytic mechanism.

It belongs to the PNP/UDP phosphorylase family. In terms of assembly, homohexamer; trimer of homodimers.

It catalyses the reaction a purine D-ribonucleoside + phosphate = a purine nucleobase + alpha-D-ribose 1-phosphate. It carries out the reaction a purine 2'-deoxy-D-ribonucleoside + phosphate = a purine nucleobase + 2-deoxy-alpha-D-ribose 1-phosphate. Its function is as follows. Catalyzes the reversible phosphorolytic breakdown of the N-glycosidic bond in the beta-(deoxy)ribonucleoside molecules, with the formation of the corresponding free purine bases and pentose-1-phosphate. The chain is Purine nucleoside phosphorylase DeoD-type from Aliivibrio salmonicida (strain LFI1238) (Vibrio salmonicida (strain LFI1238)).